Reading from the N-terminus, the 267-residue chain is Multivesicular body subunit 12A (267 aa).

The MABP domain occupies 7–146 (AAPLSGVGWA…SFAIWCKKGA (140 aa)). The SH3-binding signature appears at 154 to 159 (PVPKPR). Positions 210–259 (MDGVPFTLHPKFERSPKSDSSAILTDLTVKSLADIEKEYNYTFVVERTAA) constitute a UMA domain.

This sequence belongs to the MVB12 family. As to quaternary structure, component of the ESCRT-I complex (endosomal sorting complex required for transport I).

It is found in the cytoplasm. It localises to the endosome. Its subcellular location is the late endosome membrane. Component of the ESCRT-I complex, a regulator of vesicular trafficking process. Required for the sorting of endocytic ubiquitinated cargos into multivesicular bodies. This chain is Multivesicular body subunit 12A (MVB12A), found in Gallus gallus (Chicken).